The sequence spans 348 residues: Protein pelota homolog (348 aa).

The protein belongs to the eukaryotic release factor 1 family. Pelota subfamily. In terms of assembly, monomer. A divalent metal cation serves as cofactor.

The protein localises to the cytoplasm. Its function is as follows. May function in recognizing stalled ribosomes, interact with stem-loop structures in stalled mRNA molecules, and effect endonucleolytic cleavage of the mRNA. May play a role in the release non-functional ribosomes and degradation of damaged mRNAs. Has endoribonuclease activity. In Methanococcus maripaludis (strain C6 / ATCC BAA-1332), this protein is Protein pelota homolog.